A 90-amino-acid chain; its full sequence is Small ribosomal subunit protein uS15c (90 aa).

This sequence belongs to the universal ribosomal protein uS15 family. In terms of assembly, part of the 30S ribosomal subunit.

Its subcellular location is the plastid. It is found in the chloroplast. In Lotus japonicus (Lotus corniculatus var. japonicus), this protein is Small ribosomal subunit protein uS15c (rps15).